The sequence spans 408 residues: Succinylornithine transaminase (408 aa).

An N6-(pyridoxal phosphate)lysine modification is found at K252.

The protein belongs to the class-III pyridoxal-phosphate-dependent aminotransferase family. AstC subfamily. Requires pyridoxal 5'-phosphate as cofactor.

It carries out the reaction N(2)-succinyl-L-ornithine + 2-oxoglutarate = N-succinyl-L-glutamate 5-semialdehyde + L-glutamate. The protein operates within amino-acid degradation; L-arginine degradation via AST pathway; L-glutamate and succinate from L-arginine: step 3/5. Functionally, catalyzes the transamination of N(2)-succinylornithine and alpha-ketoglutarate into N(2)-succinylglutamate semialdehyde and glutamate. Can also act as an acetylornithine aminotransferase. This is Succinylornithine transaminase from Salmonella dublin (strain CT_02021853).